The chain runs to 283 residues: MKKKVLALAAAITVVAPLQSVAFAHENDGGSKIKIVHRWSAEDKHKEGVNSHLWIVNRAIDIMSRNTTLVKQDRVAQLNEWRTELENGIYAADYENPYYDNSTFASHFYDPDNGKTYIPFAKQAKETGAKYFKLAGESYKNKDMKQAFFYLGLSLHYLGDVNQPMHAANFTNLSYPQGFHSKYENFVDTIKDNYKVTDGNGYWNWKGTNPEEWIHGAAVVAKQDYSGIVNDNTKDWFVKAAVSQEYADKWRAEVTPMTGKRLMDAQRVTAGYIQLWFDTYGDR.

The first 24 residues, Met-1–Ala-24, serve as a signal peptide directing secretion. A propeptide spanning residues His-25–Arg-38 is cleaved from the precursor. The Zn(2+) site is built by Trp-39, His-52, Asp-93, His-107, His-156, Asp-160, His-166, His-180, and Glu-184. In terms of domain architecture, Zn-dependent PLC spans Trp-39–Arg-283.

Belongs to the bacterial zinc-metallophospholipase C family. Monomer. Zn(2+) serves as cofactor.

It carries out the reaction a 1,2-diacyl-sn-glycero-3-phosphocholine + H2O = phosphocholine + a 1,2-diacyl-sn-glycerol + H(+). Required, with sphingomyelinase, to effect target cell lysis (hemolysis). This is Phospholipase C (plc) from Bacillus cereus.